A 794-amino-acid polypeptide reads, in one-letter code: MLSIERKRTEKVDFSKPLTKYIKEQFSKAESDQHETQIATLNGLREDVRNLQERTETSKEMVWKYYSILSSLELRFPISENNVRISFPWTDSYRQRKSTLYSIYFERASVLFNYGSIVSQIASSTNRSNIEGVKKACNQFQLAAGVFNKLREYASLHPECSTSADFSSESLQALVTIMLAQAQECIYEKASMDNLSDSILSKLAAQVAEYYDTFNQLLNSNSLKSIVDRNWNITATVKSYLYKAISLYCHAKGLEQVSQFGEQVSRLMIAVDNINQSKVNLAKTAPIELKEIVERYVISITRYCESAKKDNDTIYHDTIPPAHKLTPIEKKPLAKALPLPEINFVDPFNSLVPFSVKEDSAYYNDQKETLLRKELDNIEFHNQSAKASLLSMGLPGSIEALDVGVPVALKEKMNVVTNEQGVSNITRLLENIQQLSDEDSAICLSAGNLLKKEEDEDNLMRATYGAQWHRTPSYTLTANLTQDYAKYTSHLQHSTKSDSFIRKKFEDHKNSIQELENQTEIIALLPTNNLPSGKIAEIASLTVLMNDLDALMANRESIAEKLKNLCKKDDITLKLLSPQKDKSLIYAEEIQKYEPLQMSLNESFLKQQKLIEDIRKENEKFTNQKSKQGNQREEILQKYANAYKVYNELKANLDEGTQFYLNFQEILNKFLNRCKDFTTGRENEKIELKRQIEAGVNPHSPLTSPSPSLQSPVNNYPNQFSSPQYHTSPNQQQQQQQQYVPSSQPPPQYSYNPQPYQPPQQFGGPLPPPQSFSAPPPPQSFTAPPPYNSNNKHY.

The BRO1 domain maps to 1-385 (MLSIERKRTE…DNIEFHNQSA (385 aa)). Coiled coils occupy residues 499–568 (SFIR…LCKK) and 600–655 (LNES…NLDE). Residues 695–794 (GVNPHSPLTS…PPYNSNNKHY (100 aa)) are disordered. Over residues 698-712 (PHSPLTSPSPSLQSP) the composition is skewed to low complexity. The segment covering 713–722 (VNNYPNQFSS) has biased composition (polar residues). Low complexity-rich tracts occupy residues 723–742 (PQYH…YVPS) and 749–764 (YSYN…QFGG). Residues 765-787 (PLPPPQSFSAPPPPQSFTAPPPY) show a composition bias toward pro residues.

In terms of assembly, self-associates; the interaction is calcium-independent Interacts with pefa; the interaction is calcium-dependent. Interacts with pefb; the interaction is calcium-dependent.

It is found in the cytoplasm. It localises to the cytoplasmic vesicle membrane. The protein resides in the endosome. Unknown. Required for development but not for cell death. The sequence is that of ALG-2 interacting protein X (alxA) from Dictyostelium discoideum (Social amoeba).